Reading from the N-terminus, the 499-residue chain is Interleukin-17 receptor B (499 aa).

Positions 1–17 are cleaved as a signal peptide; sequence MLLVLLILAASCRSALP. Residues 18 to 286 are Extracellular-facing; that stretch reads REPTIQCGSE…PDDNRRMLGG (269 aa). Residues Asn67, Asn103, Asn156, and Asn197 are each glycosylated (N-linked (GlcNAc...) asparagine). A helical transmembrane segment spans residues 287–307; the sequence is WLPLFLVLLVAVWVLAAGIYL. Residues 308–499 lie on the Cytoplasmic side of the membrane; sequence TWRQGRSTKT…QACHDSCSPL (192 aa). The SEFIR domain occupies 328–474; that stretch reads LIKVLVVYPS…LMKDATAFHT (147 aa).

As to quaternary structure, interacts with DAZAP2. Interacts with TRAF3IP2. In terms of tissue distribution, liver and testis. Expressed at lower level in kidney and lung. Expressed in selected T-cell, B-cell and myeloid cell lines.

The protein localises to the cell membrane. It is found in the secreted. Functionally, receptor for the pro-inflammatory cytokines IL17B and IL17E. May play a role in controlling the growth and/or differentiation of hematopoietic cells. In Mus musculus (Mouse), this protein is Interleukin-17 receptor B (Il17rb).